Reading from the N-terminus, the 214-residue chain is Imidazole glycerol phosphate synthase subunit HisH (214 aa).

One can recognise a Glutamine amidotransferase type-1 domain in the interval 3-211 (TIAVIDYDMG…VSKVIPKNLA (209 aa)). Cys-81 (nucleophile) is an active-site residue. Catalysis depends on residues His-186 and Glu-188.

As to quaternary structure, heterodimer of HisH and HisF.

Its subcellular location is the cytoplasm. It carries out the reaction 5-[(5-phospho-1-deoxy-D-ribulos-1-ylimino)methylamino]-1-(5-phospho-beta-D-ribosyl)imidazole-4-carboxamide + L-glutamine = D-erythro-1-(imidazol-4-yl)glycerol 3-phosphate + 5-amino-1-(5-phospho-beta-D-ribosyl)imidazole-4-carboxamide + L-glutamate + H(+). The enzyme catalyses L-glutamine + H2O = L-glutamate + NH4(+). Its pathway is amino-acid biosynthesis; L-histidine biosynthesis; L-histidine from 5-phospho-alpha-D-ribose 1-diphosphate: step 5/9. Functionally, IGPS catalyzes the conversion of PRFAR and glutamine to IGP, AICAR and glutamate. The HisH subunit catalyzes the hydrolysis of glutamine to glutamate and ammonia as part of the synthesis of IGP and AICAR. The resulting ammonia molecule is channeled to the active site of HisF. The sequence is that of Imidazole glycerol phosphate synthase subunit HisH from Trichodesmium erythraeum (strain IMS101).